The sequence spans 471 residues: MKIKTRFAPSPTGYLHVGGARTALYSWLFARNHGGEFVLRIEDTDLERSTPEAIEAIMDGMNWLSLEWDEGPYYQTKRFDRYNAVIDQMLEEGTAYKCYCSKERLEALREEQMAKGEKPRYDGRCRHSHEHHADDEPCVVRFANPQEGSVVFDDQIRGPIEFSNQELDDLIIRRTDGSPTYNFCVVVDDWDMEITHVIRGEDHINNTPRQINILKALNAPVPVYAHVSMINGDDGKKLSKRHGAVSVMQYRDDGYLPEALLNYLVRLGWSHGDQEIFTREEMIKYFTLNAVSKSASAFNTDKLLWLNHHYINALPPEYVATHLQWHIEQENIDTRNGPQLADLVKLLGERCKTLKEMAQTCRYFYEDFAEFDADAAKKHLRPVARQPLEVVRDKLAAITDWTAENVHHAIQATADELEVGMGKVGMPLRVAVTGAGQSPALDVTVHAIGKTRSIERINKALAFIAERENQQ.

The short motif at 9-19 (PSPTGYLHVGG) is the 'HIGH' region element. Zn(2+) is bound by residues Cys98, Cys100, Cys125, and His127. A 'KMSKS' region motif is present at residues 237–241 (KLSKR). ATP is bound at residue Lys240.

It belongs to the class-I aminoacyl-tRNA synthetase family. Glutamate--tRNA ligase type 1 subfamily. In terms of assembly, monomer. It depends on Zn(2+) as a cofactor.

It is found in the cytoplasm. It carries out the reaction tRNA(Glu) + L-glutamate + ATP = L-glutamyl-tRNA(Glu) + AMP + diphosphate. Functionally, catalyzes the attachment of glutamate to tRNA(Glu) in a two-step reaction: glutamate is first activated by ATP to form Glu-AMP and then transferred to the acceptor end of tRNA(Glu). The protein is Glutamate--tRNA ligase of Escherichia coli (strain SMS-3-5 / SECEC).